The primary structure comprises 93 residues: Muconolactone Delta-isomerase (93 aa).

The protein belongs to the muconolactone Delta-isomerase family. As to quaternary structure, homodecamer.

The enzyme catalyses (S)-muconolactone = (4,5-dihydro-5-oxofuran-2-yl)-acetate. Its pathway is aromatic compound metabolism; beta-ketoadipate pathway; 5-oxo-4,5-dihydro-2-furylacetate from catechol: step 3/3. This is Muconolactone Delta-isomerase (catC) from Rhodococcus opacus (Nocardia opaca).